The following is a 652-amino-acid chain: Carboxypeptidase S1 homolog A (652 aa).

The first 19 residues, 1 to 19, serve as a signal peptide directing secretion; that stretch reads MRLAASIAVALPVIGAASA. Cys-50 and Cys-121 form a disulfide bridge. Residues Asn-77, Asn-132, Asn-161, Asn-168, Asn-184, and Asn-202 are each glycosylated (N-linked (GlcNAc...) asparagine). Ser-238 is a catalytic residue. N-linked (GlcNAc...) asparagine glycans are attached at residues Asn-260, Asn-299, Asn-347, and Asn-410. 2 disulfides stabilise this stretch: Cys-325–Cys-361 and Cys-332–Cys-354. The active site involves Asp-458. Cys-461 serves as a coordination point for substrate. Asn-474, Asn-492, and Asn-505 each carry an N-linked (GlcNAc...) asparagine glycan. Residue His-516 is part of the active site. Glu-517 contributes to the substrate binding site. Asn-594 carries N-linked (GlcNAc...) asparagine glycosylation. Residues 608–628 form a disordered region; it reads AASKGNPPPTTTSSPTASPTA. Positions 618–628 are enriched in low complexity; sequence TTSSPTASPTA. Gly-629 carries the GPI-anchor amidated glycine lipid modification. The propeptide at 630-652 is removed in mature form; it reads SAMLKAPVAMLAISALTVLAFYL.

This sequence belongs to the peptidase S10 family.

Its subcellular location is the cell membrane. The enzyme catalyses Preferential release of a C-terminal arginine or lysine residue.. Its function is as follows. Extracellular serine carboxypeptidase that contributes to pathogenicity. This is Carboxypeptidase S1 homolog A (SCPA) from Trichophyton verrucosum (strain HKI 0517).